The primary structure comprises 59 residues: Large ribosomal subunit protein uL30 (59 aa).

It belongs to the universal ribosomal protein uL30 family. Part of the 50S ribosomal subunit.

This Clostridium beijerinckii (strain ATCC 51743 / NCIMB 8052) (Clostridium acetobutylicum) protein is Large ribosomal subunit protein uL30.